A 159-amino-acid chain; its full sequence is Major latex protein 149 (159 aa).

The protein belongs to the MLP family. As to expression, laticifer.

The protein localises to the vacuole. It is found in the cytoplasmic vesicle. Its function is as follows. Not known; MLPs constitute up to 50% of the soluble latex protein. This Papaver somniferum (Opium poppy) protein is Major latex protein 149 (MLP149).